A 281-amino-acid chain; its full sequence is Bifunctional protein FolD (281 aa).

NADP(+)-binding positions include 165–167 (GRS) and S190.

It belongs to the tetrahydrofolate dehydrogenase/cyclohydrolase family. In terms of assembly, homodimer.

It catalyses the reaction (6R)-5,10-methylene-5,6,7,8-tetrahydrofolate + NADP(+) = (6R)-5,10-methenyltetrahydrofolate + NADPH. The catalysed reaction is (6R)-5,10-methenyltetrahydrofolate + H2O = (6R)-10-formyltetrahydrofolate + H(+). It functions in the pathway one-carbon metabolism; tetrahydrofolate interconversion. Catalyzes the oxidation of 5,10-methylenetetrahydrofolate to 5,10-methenyltetrahydrofolate and then the hydrolysis of 5,10-methenyltetrahydrofolate to 10-formyltetrahydrofolate. This chain is Bifunctional protein FolD, found in Polaromonas sp. (strain JS666 / ATCC BAA-500).